The following is a 304-amino-acid chain: MPRQATSRLVVGEGEGSQGASGPAATMLRSLLLHSLRLCAQTASCLVLFPRFLGTAFMLWLLDFLCIRKHFLGRRRRGQPEPEVELNSEGEEVPPDDPPICVSDDNRLCTLASLKAVWHGQKLDFFKQAHEGGPAPNSEVVLPDGFQSQHILDYAQGNRPLVLNFGSCTUPPFMARMSAFQRLVTKYQRDVDFLIIYIEEAHPSDGWVTTDSPYIIPQHRSLEDRVSAARVLQQGAPGCALVLDTMANSSSSAYGAYFERLYVIQSGTIMYQGGRGPDGYQVSELRTWLERYDEQLHGARPRRV.

The disordered stretch occupies residues 1 to 23; the sequence is MPRQATSRLVVGEGEGSQGASGP. Over 1–44 the chain is Cytoplasmic; sequence MPRQATSRLVVGEGEGSQGASGPAATMLRSLLLHSLRLCAQTAS. Residues 45 to 67 traverse the membrane as a helical; Signal-anchor for type II membrane protein segment; the sequence is CLVLFPRFLGTAFMLWLLDFLCI. At 68 to 304 the chain is on the extracellular side; that stretch reads RKHFLGRRRR…QLHGARPRRV (237 aa). Residues 78-99 are disordered; the sequence is GQPEPEVELNSEGEEVPPDDPP. Over residues 82-95 the composition is skewed to acidic residues; the sequence is PEVELNSEGEEVPP. Selenocysteine 170 is a catalytic residue. A non-standard amino acid (selenocysteine) is located at residue selenocysteine 170.

The protein belongs to the iodothyronine deiodinase family. As to quaternary structure, monomer. Homodimer. May undergo minor heretodimerization with DIO1 and DIO2. As to expression, expressed in placenta and several fetal tissues.

The protein resides in the cell membrane. It is found in the endosome membrane. It carries out the reaction 3,3',5'-triiodo-L-thyronine + iodide + A + H(+) = L-thyroxine + AH2. The enzyme catalyses 3,3'-diiodo-L-thyronine + iodide + A + H(+) = 3,3',5-triiodo-L-thyronine + AH2. The catalysed reaction is 3-iodo-L-thyronine + iodide + A + H(+) = 3,5-diiodo-L-thyronine + AH2. It catalyses the reaction L-thyronine + iodide + A + H(+) = 3-iodo-L-thyronine + AH2. It carries out the reaction 3',5'-diiodo-L-thyronine + iodide + A + H(+) = 3,3',5'-triiodo-L-thyronine + AH2. The enzyme catalyses 3'-iodo-L-thyronine + iodide + A + H(+) = 3,3'-diiodo-L-thyronine + AH2. The catalysed reaction is 3,3',5'-triiodothyronamine + iodide + A + H(+) = 3,3',5,5'-tetraiodothyronamine + AH2. It catalyses the reaction 3',5'-diiodothyronamine + iodide + A + H(+) = 3,3',5'-triiodothyronamine + AH2. It carries out the reaction 3,3'-diiodothyronamine + iodide + A + H(+) = 3,3',5-triiodothyronamine + AH2. The enzyme catalyses 3-iodothyronamine + iodide + A + H(+) = 3,5-diiodothyronamine + AH2. The catalysed reaction is 3'-iodothyronamine + iodide + A + H(+) = 3,3'-diiodothyronamine + AH2. It catalyses the reaction thyronamine + iodide + A + H(+) = 3-iodothyronamine + AH2. Functionally, plays a crucial role in the metabolism of thyroid hormones (TH) and has specific roles in TH activation and inactivation by deiodination. Catalyzes the deiodination of L-thyroxine (T4) to 3,3',5'-triiodothyronine (rT3), 3,5,3'-triiodothyronine (T3) to 3,3'-diiodothyronine (3,3'-T2), 3,5-diiodothyronine (3,5-T2) to 3-monoiodothyronine (3-T1), rT3 to 3',5'-diiodothyronine (3',5'-T2) and 3,3'-T2 to 3'-monoiodothyronine (3'-T1) via inner-ring deiodination (IRD). Catalyzes the deiodination of 3-T1 to L-thyronine (T0) via outer-ring deiodination (ORD). Catalyzes the tyrosyl ring deiodinations of 3,3',5,5'-tetraiodothyronamine, 3,3',5'-triiodothyronamine, 3,5,3'-triiodothyronamine, 3,5-diiodothyronamine, 3,3'-diiodothyronamine and 3-iodothyronamine. This chain is Thyroxine 5-deiodinase (DIO3), found in Homo sapiens (Human).